We begin with the raw amino-acid sequence, 202 residues long: Glycerol-3-phosphate acyltransferase (202 aa).

The next 6 helical transmembrane spans lie at 2-22 (MIVL…GVII), 54-74 (FVVT…PLLF), 85-105 (FFTN…YPIF), 118-138 (AGVV…IFFL), 140-160 (LYLT…CVIG), and 162-182 (LIIH…LLIF).

This sequence belongs to the PlsY family. In terms of assembly, probably interacts with PlsX.

The protein resides in the cell membrane. It carries out the reaction an acyl phosphate + sn-glycerol 3-phosphate = a 1-acyl-sn-glycero-3-phosphate + phosphate. The protein operates within lipid metabolism; phospholipid metabolism. In terms of biological role, catalyzes the transfer of an acyl group from acyl-phosphate (acyl-PO(4)) to glycerol-3-phosphate (G3P) to form lysophosphatidic acid (LPA). This enzyme utilizes acyl-phosphate as fatty acyl donor, but not acyl-CoA or acyl-ACP. The sequence is that of Glycerol-3-phosphate acyltransferase from Staphylococcus carnosus (strain TM300).